The following is a 256-amino-acid chain: Imidazole glycerol phosphate synthase subunit HisF (256 aa).

Active-site residues include D11 and D130.

It belongs to the HisA/HisF family. As to quaternary structure, heterodimer of HisH and HisF.

It is found in the cytoplasm. The enzyme catalyses 5-[(5-phospho-1-deoxy-D-ribulos-1-ylimino)methylamino]-1-(5-phospho-beta-D-ribosyl)imidazole-4-carboxamide + L-glutamine = D-erythro-1-(imidazol-4-yl)glycerol 3-phosphate + 5-amino-1-(5-phospho-beta-D-ribosyl)imidazole-4-carboxamide + L-glutamate + H(+). It functions in the pathway amino-acid biosynthesis; L-histidine biosynthesis; L-histidine from 5-phospho-alpha-D-ribose 1-diphosphate: step 5/9. In terms of biological role, IGPS catalyzes the conversion of PRFAR and glutamine to IGP, AICAR and glutamate. The HisF subunit catalyzes the cyclization activity that produces IGP and AICAR from PRFAR using the ammonia provided by the HisH subunit. This is Imidazole glycerol phosphate synthase subunit HisF from Cupriavidus pinatubonensis (strain JMP 134 / LMG 1197) (Cupriavidus necator (strain JMP 134)).